Reading from the N-terminus, the 456-residue chain is GTPase Der (456 aa).

EngA-type G domains lie at 4-169 (PVVA…PSKD) and 178-353 (VQLA…DQSR). GTP-binding positions include 10–17 (GRPNVGKS), 57–61 (DTGGL), 120–123 (NKCE), 184–191 (GRPNVGKS), 231–235 (DTAGI), and 296–299 (NKWD). The region spanning 354–439 (RRVTTSVVNE…PIKLFWRGKQ (86 aa)) is the KH-like domain.

Belongs to the TRAFAC class TrmE-Era-EngA-EngB-Septin-like GTPase superfamily. EngA (Der) GTPase family. As to quaternary structure, associates with the 50S ribosomal subunit.

GTPase that plays an essential role in the late steps of ribosome biogenesis. This chain is GTPase Der, found in Prochlorococcus marinus (strain NATL1A).